The primary structure comprises 629 residues: 5-aminolevulinate synthase, mitochondrial (629 aa).

A mitochondrion-targeting transit peptide spans 1-69 (MDSVLRQSKA…VQSARTGGRA (69 aa)). Residues R155, S268, and K287 each contribute to the substrate site. Residues S320, H348, and T388 each coordinate pyridoxal 5'-phosphate. K391 is an active-site residue. K391 is subject to N6-(pyridoxal phosphate)lysine. T420 and T421 together coordinate pyridoxal 5'-phosphate. Residue T506 participates in substrate binding.

It belongs to the class-II pyridoxal-phosphate-dependent aminotransferase family. In terms of assembly, homodimer. The cofactor is pyridoxal 5'-phosphate.

It is found in the mitochondrion matrix. It carries out the reaction succinyl-CoA + glycine + H(+) = 5-aminolevulinate + CO2 + CoA. Its pathway is porphyrin-containing compound metabolism; protoporphyrin-IX biosynthesis; 5-aminolevulinate from glycine: step 1/1. In terms of biological role, catalyzes the synthesis of 5-aminolevulinate (ALA) from succinyl-CoA and glycine, the first and rate-limiting step in heme biosynthesis. The polypeptide is 5-aminolevulinate synthase, mitochondrial (alv-1) (Neurospora crassa (strain ATCC 24698 / 74-OR23-1A / CBS 708.71 / DSM 1257 / FGSC 987)).